The sequence spans 177 residues: Peptide deformylase 2 (177 aa).

Cys99 and His141 together coordinate Fe cation. The active site involves Glu142. His145 is a binding site for Fe cation.

This sequence belongs to the polypeptide deformylase family. The cofactor is Fe(2+).

It carries out the reaction N-terminal N-formyl-L-methionyl-[peptide] + H2O = N-terminal L-methionyl-[peptide] + formate. Removes the formyl group from the N-terminal Met of newly synthesized proteins. Requires at least a dipeptide for an efficient rate of reaction. N-terminal L-methionine is a prerequisite for activity but the enzyme has broad specificity at other positions. The polypeptide is Peptide deformylase 2 (Ralstonia nicotianae (strain ATCC BAA-1114 / GMI1000) (Ralstonia solanacearum)).